The sequence spans 239 residues: 1-(5-phosphoribosyl)-5-[(5-phosphoribosylamino)methylideneamino] imidazole-4-carboxamide isomerase (239 aa).

The active-site Proton acceptor is the D9. D131 (proton donor) is an active-site residue.

The protein belongs to the HisA/HisF family.

It localises to the cytoplasm. It catalyses the reaction 1-(5-phospho-beta-D-ribosyl)-5-[(5-phospho-beta-D-ribosylamino)methylideneamino]imidazole-4-carboxamide = 5-[(5-phospho-1-deoxy-D-ribulos-1-ylimino)methylamino]-1-(5-phospho-beta-D-ribosyl)imidazole-4-carboxamide. The protein operates within amino-acid biosynthesis; L-histidine biosynthesis; L-histidine from 5-phospho-alpha-D-ribose 1-diphosphate: step 4/9. This Bacteroides fragilis (strain ATCC 25285 / DSM 2151 / CCUG 4856 / JCM 11019 / LMG 10263 / NCTC 9343 / Onslow / VPI 2553 / EN-2) protein is 1-(5-phosphoribosyl)-5-[(5-phosphoribosylamino)methylideneamino] imidazole-4-carboxamide isomerase.